Consider the following 103-residue polypeptide: Large ribosomal subunit protein bL21 (103 aa).

This sequence belongs to the bacterial ribosomal protein bL21 family. As to quaternary structure, part of the 50S ribosomal subunit. Contacts protein L20.

Functionally, this protein binds to 23S rRNA in the presence of protein L20. The chain is Large ribosomal subunit protein bL21 from Kocuria rhizophila (strain ATCC 9341 / DSM 348 / NBRC 103217 / DC2201).